A 106-amino-acid chain; its full sequence is Thioredoxin (106 aa).

The region spanning 2 to 106 (SHYIELTEEN…LKEQLNKLLG (105 aa)) is the Thioredoxin domain. C30 and C33 are oxidised to a cystine.

It belongs to the thioredoxin family.

Its function is as follows. Participates in various redox reactions through the reversible oxidation of its active center dithiol to a disulfide and catalyzes dithiol-disulfide exchange reactions. The protein is Thioredoxin (trxA) of Helicobacter pylori (strain J99 / ATCC 700824) (Campylobacter pylori J99).